A 230-amino-acid polypeptide reads, in one-letter code: MADGPPSIPGPLPSSFDSDQDFYNERPMQKVFRKIKEEPLIPLGIGLTSLAFVNAYRALRRGDSKQANRMFRARVAAQGFTVIAMLAGSMYYQKDREKSKELRQLQEQRDAEEKRLKWIRELEARDDEEKAMKARLEQRRQLVQAQRAEEAEAAAAAAATTEEKPEATSGGAGGILSRIGLWPQGEKKEEEKKVAEELVEETAGDKSGKKKNPKSSLGDLGEIISSQKKD.

Residues 1–12 (MADGPPSIPGPL) show a composition bias toward pro residues. A disordered region spans residues 1–20 (MADGPPSIPGPLPSSFDSDQ). The HIG1 domain occupies 12-103 (LPSSFDSDQD…KDREKSKELR (92 aa)). A run of 2 helical transmembrane segments spans residues 40 to 59 (LIPL…YRAL) and 71 to 93 (FRAR…MYYQ). Positions 93-156 (QKDREKSKEL…RAEEAEAAAA (64 aa)) form a coiled coil. The disordered stretch occupies residues 153–230 (AAAAAAATTE…GEIISSQKKD (78 aa)). A compositionally biased stretch (basic and acidic residues) spans 185-196 (GEKKEEEKKVAE).

The protein belongs to the RCF1 family. Associates with the respiratory chain complex III/complex IV supercomplex.

Its subcellular location is the mitochondrion membrane. Functionally, cytochrome c oxidase subunit which plays a role in assembly of respiratory supercomplexes. This Fusarium vanettenii (strain ATCC MYA-4622 / CBS 123669 / FGSC 9596 / NRRL 45880 / 77-13-4) (Fusarium solani subsp. pisi) protein is Respiratory supercomplex factor 1, mitochondrial (RCF1).